The following is a 79-amino-acid chain: uncharacterized protein (79 aa).

Residues 10-60 (EAVLTMDSKGQILLPKELRERAGLKAGDRLVAIAGCDENEEVCCLILVKAE) form the SpoVT-AbrB domain.

This is an uncharacterized protein from Archaeoglobus fulgidus (strain ATCC 49558 / DSM 4304 / JCM 9628 / NBRC 100126 / VC-16).